The sequence spans 197 residues: Xanthine phosphoribosyltransferase (197 aa).

Residues L20 and N27 each coordinate xanthine. A128 to A132 lines the 5-phospho-alpha-D-ribose 1-diphosphate pocket. K156 is a binding site for xanthine.

Belongs to the purine/pyrimidine phosphoribosyltransferase family. Xpt subfamily. Homodimer.

It is found in the cytoplasm. The enzyme catalyses XMP + diphosphate = xanthine + 5-phospho-alpha-D-ribose 1-diphosphate. It functions in the pathway purine metabolism; XMP biosynthesis via salvage pathway; XMP from xanthine: step 1/1. In terms of biological role, converts the preformed base xanthine, a product of nucleic acid breakdown, to xanthosine 5'-monophosphate (XMP), so it can be reused for RNA or DNA synthesis. This Bacillus mycoides (strain KBAB4) (Bacillus weihenstephanensis) protein is Xanthine phosphoribosyltransferase.